The primary structure comprises 585 residues: Regulator of gene activity (585 aa).

Residues 42-56 (FQTDFANSYPGTANY) are compositionally biased toward polar residues. Disordered stretches follow at residues 42 to 93 (FQTD…GNRN), 148 to 191 (GGGG…PGSK), and 349 to 394 (GVGG…KVTN). Over residues 58–71 (QAPQQQQQQQQQPQ) the composition is skewed to low complexity. Polar residues predominate over residues 166 to 184 (PSLTNARGQNDQTLPQSNP). Positions 349 to 367 (GVGGGLGSGSGSSGSGAGG) are enriched in gly residues. The span at 372–388 (DNSSNDKLVKSGVQTSP) shows a compositional bias: polar residues.

It belongs to the CNOT2/3/5 family. In terms of assembly, component of the CCR4-NOT complex composed of at least Pop2/Caf1-55, Ccr4, Not1, Rga/Not2, and Not3. As to expression, expressed in heterogeneous levels between adjacent germline stem cells (at protein level).

The protein localises to the cytoplasm. Component of the CCR4-NOT complex which is one of the major cellular mRNA deadenylases and is linked to various cellular processes including bulk mRNA degradation, miRNA-mediated repression, translational repression during translational initiation and general transcription regulation. Additional complex functions may be a consequence of its influence on mRNA expression. Essential for viability. Acts as a suppressor of position effect variegation (PEV) at the white locus and regulates the expression of several unrelated genes. Plays a role in germline stem cell differentiation in the ovaries. This chain is Regulator of gene activity, found in Drosophila melanogaster (Fruit fly).